The following is a 213-amino-acid chain: GTP cyclohydrolase 1 (213 aa).

Residues 1–27 (MDDVVKSLLQRTTSSLTKPAPARPSRE) form a disordered region. 3 residues coordinate Zn(2+): cysteine 100, histidine 103, and cysteine 172.

This sequence belongs to the GTP cyclohydrolase I family. In terms of assembly, homomer.

The enzyme catalyses GTP + H2O = 7,8-dihydroneopterin 3'-triphosphate + formate + H(+). Its pathway is cofactor biosynthesis; 7,8-dihydroneopterin triphosphate biosynthesis; 7,8-dihydroneopterin triphosphate from GTP: step 1/1. This chain is GTP cyclohydrolase 1, found in Beijerinckia indica subsp. indica (strain ATCC 9039 / DSM 1715 / NCIMB 8712).